The sequence spans 266 residues: Undecaprenyl-diphosphatase (266 aa).

Helical transmembrane passes span 1–21 (MDTF…FLPI), 39–59 (QGLS…VIYF), 87–107 (WWII…KDFI), 111–131 (LRSA…LWWA), 149–169 (ALLI…RSGA), 183–203 (AAAR…AILV), 218–238 (ALTL…HYFL), and 246–266 (MTPF…FIFL).

This sequence belongs to the UppP family.

The protein localises to the cell inner membrane. It catalyses the reaction di-trans,octa-cis-undecaprenyl diphosphate + H2O = di-trans,octa-cis-undecaprenyl phosphate + phosphate + H(+). In terms of biological role, catalyzes the dephosphorylation of undecaprenyl diphosphate (UPP). Confers resistance to bacitracin. The chain is Undecaprenyl-diphosphatase from Shewanella putrefaciens (strain CN-32 / ATCC BAA-453).